Here is a 958-residue protein sequence, read N- to C-terminus: Protein translocase subunit SecA (958 aa).

Residues Q87, 105-109, and D524 each bind ATP; that span reads GEGKT. The segment at 598–617 is disordered; sequence RRIDNQLRGRSGRQGDPGRS. Zn(2+) is bound by residues C939, C941, C950, and H951.

The protein belongs to the SecA family. As to quaternary structure, monomer and homodimer. Part of the essential Sec protein translocation apparatus which comprises SecA, SecYEG and auxiliary proteins SecDF-YajC and YidC. It depends on Zn(2+) as a cofactor.

Its subcellular location is the cell inner membrane. It localises to the cytoplasm. The catalysed reaction is ATP + H2O + cellular proteinSide 1 = ADP + phosphate + cellular proteinSide 2.. Part of the Sec protein translocase complex. Interacts with the SecYEG preprotein conducting channel. Has a central role in coupling the hydrolysis of ATP to the transfer of proteins into and across the cell membrane, serving both as a receptor for the preprotein-SecB complex and as an ATP-driven molecular motor driving the stepwise translocation of polypeptide chains across the membrane. The chain is Protein translocase subunit SecA from Methylobacterium sp. (strain 4-46).